The primary structure comprises 529 residues: Scarecrow-like protein 13 (529 aa).

The span at 51 to 81 (ASGSLPSYDSPSVSITSGRSPFSPQGSQSCI) shows a compositional bias: polar residues. The disordered stretch occupies residues 51 to 84 (ASGSLPSYDSPSVSITSGRSPFSPQGSQSCISDL). Residues 146–525 (LLALTPQLDL…RPMATCSVWK (380 aa)) enclose the GRAS domain. The leucine repeat I (LRI) stretch occupies residues 153–213 (LDLKEVLVEA…RARLEGSGSN (61 aa)). Residues 232 to 297 (MSVLYEICPY…GGPPLLRVTG (66 aa)) form a VHIID region. The VHIID signature appears at 263-267 (VHIID). The leucine repeat II (LRII) stretch occupies residues 313 to 345 (LVGERLATLAQSCGVPFEFHDAIMSGCKVQREH). A PFYRE region spans residues 354–448 (VVVNFPYVLH…QHCVARDIVN (95 aa)). The SAW stretch occupies residues 451-525 (ACEESERVER…RPMATCSVWK (75 aa)).

This sequence belongs to the GRAS family. As to expression, expressed in roots, hypocotyls, cotyledons, shoot apex, leaves, flowers and siliques.

The protein resides in the cytoplasm. Its subcellular location is the nucleus. Probable transcription factor that acts as a positive regulator of continuous red light signals downstream of phytochrome B (phyB). Required for the regulation of hypocotyl elongation during de-etiolation. May be required to modulate phytochrome A (phyA) signal transduction in a phyB-independent way. The sequence is that of Scarecrow-like protein 13 (SCL13) from Arabidopsis thaliana (Mouse-ear cress).